A 355-amino-acid chain; its full sequence is Tyrosine recombinase XerC (355 aa).

In terms of domain architecture, Core-binding (CB) spans 4–89; that stretch reads TQFDGDIDSF…AVRGFFAWAY (86 aa). Residues 138-180 form a disordered region; the sequence is DDGGAAAASGSGKAAGKTADKSADTVNRSEAPARADKRDNARV. Residues 141-154 show a composition bias toward low complexity; it reads GAAAASGSGKAAGK. Residues 158-349 form the Tyr recombinase domain; sequence KSADTVNRSE…SIEQLKNRYG (192 aa). Basic and acidic residues predominate over residues 168–178; it reads APARADKRDNA. Residues arginine 200, lysine 224, histidine 301, arginine 304, and histidine 327 contribute to the active site. Tyrosine 336 (O-(3'-phospho-DNA)-tyrosine intermediate) is an active-site residue.

This sequence belongs to the 'phage' integrase family. XerC subfamily. As to quaternary structure, forms a cyclic heterotetrameric complex composed of two molecules of XerC and two molecules of XerD.

It is found in the cytoplasm. Its function is as follows. Site-specific tyrosine recombinase, which acts by catalyzing the cutting and rejoining of the recombining DNA molecules. The XerC-XerD complex is essential to convert dimers of the bacterial chromosome into monomers to permit their segregation at cell division. It also contributes to the segregational stability of plasmids. This chain is Tyrosine recombinase XerC, found in Bifidobacterium longum subsp. infantis (strain ATCC 15697 / DSM 20088 / JCM 1222 / NCTC 11817 / S12).